The chain runs to 706 residues: Protein-glutamine gamma-glutamyltransferase 6 (706 aa).

Residues alanine 223, asparagine 226, and asparagine 228 each coordinate Ca(2+). Cysteine 274 is an active-site residue. Ca(2+) is bound by residues aspartate 303, aspartate 305, asparagine 307, serine 309, and aspartate 327. Catalysis depends on residues histidine 333 and aspartate 356. Ca(2+) contacts are provided by asparagine 396, threonine 417, glutamate 445, and glutamate 450.

It belongs to the transglutaminase superfamily. Transglutaminase family. Ca(2+) serves as cofactor.

It is found in the cytoplasm. It catalyses the reaction L-glutaminyl-[protein] + L-lysyl-[protein] = [protein]-L-lysyl-N(6)-5-L-glutamyl-[protein] + NH4(+). In terms of biological role, catalyzes the cross-linking of proteins and the conjugation of polyamines to proteins. In Homo sapiens (Human), this protein is Protein-glutamine gamma-glutamyltransferase 6 (TGM6).